The following is a 648-amino-acid chain: TBC1 domain family member 17 (648 aa).

A required for interaction with OPTN region spans residues 218 to 309; sequence DPYSTTFSSF…PELKNRIFSG (92 aa). Residues 240–259 are disordered; it reads PQPEGAASDLPPPPDDEPEP. Residues 310 to 520 enclose the Rab-GAP TBC domain; sequence GLSPSLRREA…RLWEVLWTGL (211 aa). The tract at residues 594-648 is disordered; it reads LAPPAEPHSPSPTASPLPLSPTRAPPTPPPSTDTAPQPDSSLEILPEEEDEGADS. Residues 597-624 show a composition bias toward pro residues; the sequence is PAEPHSPSPTASPLPLSPTRAPPTPPPS. Residues Ser-602 and Ser-604 each carry the phosphoserine modification. Residue Thr-606 is modified to Phosphothreonine. A Phosphoserine modification is found at Ser-608. Position 615 is a phosphothreonine (Thr-615). A compositionally biased stretch (low complexity) spans 625–634; sequence TDTAPQPDSS. Acidic residues predominate over residues 638-648; sequence LPEEEDEGADS.

As to quaternary structure, interacts with OPTN; this interaction mediates TBC1D17 transient association with Rab8.

It is found in the cytoplasmic vesicle. The protein localises to the autophagosome. The protein resides in the cytoplasm. It localises to the recycling endosome. In terms of biological role, probable RAB GTPase-activating protein that inhibits RAB8A/B function. Reduces Rab8 recruitment to tubules emanating from the endocytic recycling compartment (ERC) and inhibits Rab8-mediated endocytic trafficking, such as that of transferrin receptor (TfR). Involved in regulation of autophagy. The chain is TBC1 domain family member 17 from Homo sapiens (Human).